The sequence spans 360 residues: Histidinol-phosphate aminotransferase (360 aa).

Residue Lys222 is modified to N6-(pyridoxal phosphate)lysine.

The protein belongs to the class-II pyridoxal-phosphate-dependent aminotransferase family. Histidinol-phosphate aminotransferase subfamily. Homodimer. It depends on pyridoxal 5'-phosphate as a cofactor.

It carries out the reaction L-histidinol phosphate + 2-oxoglutarate = 3-(imidazol-4-yl)-2-oxopropyl phosphate + L-glutamate. It functions in the pathway amino-acid biosynthesis; L-histidine biosynthesis; L-histidine from 5-phospho-alpha-D-ribose 1-diphosphate: step 7/9. The polypeptide is Histidinol-phosphate aminotransferase (Listeria monocytogenes serotype 4b (strain F2365)).